The following is a 298-amino-acid chain: 3-sulfolactaldehyde reductase (298 aa).

Residues 11–12, D31, L65, and T96 contribute to the NAD(+) site; that span reads QM. R123 serves as a coordination point for 2,3-dihydroxypropane-1-sulfonate. The active site involves K171. 174–178 contacts 2,3-dihydroxypropane-1-sulfonate; sequence NNYMS. Residue K240 participates in NAD(+) binding.

Belongs to the HIBADH-related family. 3-sulfolactaldehyde reductase subfamily. As to quaternary structure, homotetramer. Dimer of dimers.

The catalysed reaction is (2S)-3-sulfopropanediol + NAD(+) = (2S)-3-sulfolactaldehyde + NADH + H(+). It carries out the reaction 4-hydroxybutanoate + NAD(+) = succinate semialdehyde + NADH + H(+). Inhibited by the NADH analogs tetrahydro-NADH and hexahydro-NADH. In terms of biological role, reduces 3-sulfolactaldehyde (SLA) to 2,3-dihydroxypropane 1-sulfonate (DHPS). Metabolite profiling studies showed that the enzyme also catalyzes in vitro the NADH-dependent reduction of succinic semialdehyde (SSA) to 4-hydroxybutyrate (GHB), and that it could be involved in the metabolism of SSA, and other potentially toxic intermediates that may accumulate under stress conditions. However, the enzyme exhibits a 42,000-fold greater catalytic efficiency for the reduction of SLA over SSA. Shows no detectable activity on the analogous glycolytic intermediate glyceraldehyde-3-phosphate. This Escherichia coli (strain K12) protein is 3-sulfolactaldehyde reductase (yihU).